Consider the following 507-residue polypeptide: MSTDGESPEEPGWKAVASPKASAMPEKRGSAQAASSSWLQGFGQPSVYHAAFVIFFEFFAWGLLTTPMLTVLHETFPQHTFLMNGLIQGVKGLLSFLSAPLIGALSDVWGRKPFLLGTVFFTCFPIPLMRISPWWYFGMISVSGVFSVTFSVIFAYVADFTQEHERSTAYGWVSATFAASLVSSPAIGTYLSSNYGDSLVVLVATVVALLDICFILVAVPESLPEKIRPASWGAQISWKQADPFASLKKVGKDSTVLLICITVFLSYLPEAGQYSSFFLYLRQVIGFGSVKIVAFIAMVGILSILAQTVFLSKLMRSLGNKNTVLLGLGFQILQLAWYGFGAQAWMMWAAGTVAAMSSITFPAVSALISRNAESDQQGVAQGIITGIRGLCNGLGPALYGFIFYLFHVELNELGPKLDSDNDPLQGAFIPGPPFLFGACIVLMSFLVALFIPEYRKTGGVQKHNNSISGSLSTPPERGSDEDIEPLLQDSNIWELSSEEPGNQCTEL.

The disordered stretch occupies residues 1 to 22; it reads MSTDGESPEEPGWKAVASPKAS. Over 1–51 the chain is Extracellular; the sequence is MSTDGESPEEPGWKAVASPKASAMPEKRGSAQAASSSWLQGFGQPSVYHAA. A helical transmembrane segment spans residues 52–72; sequence FVIFFEFFAWGLLTTPMLTVL. At 73-84 the chain is on the cytoplasmic side; sequence HETFPQHTFLMN. A helical transmembrane segment spans residues 85–105; it reads GLIQGVKGLLSFLSAPLIGAL. Topologically, residues 106–113 are extracellular; that stretch reads SDVWGRKP. A helical membrane pass occupies residues 114–134; sequence FLLGTVFFTCFPIPLMRISPW. The Cytoplasmic portion of the chain corresponds to 135–136; that stretch reads WY. A helical membrane pass occupies residues 137-157; that stretch reads FGMISVSGVFSVTFSVIFAYV. Residues 158 to 170 lie on the Extracellular side of the membrane; that stretch reads ADFTQEHERSTAY. The chain crosses the membrane as a helical span at residues 171–191; the sequence is GWVSATFAASLVSSPAIGTYL. The Cytoplasmic portion of the chain corresponds to 192–198; the sequence is SSNYGDS. Residues 199–219 traverse the membrane as a helical segment; that stretch reads LVVLVATVVALLDICFILVAV. Residues 220 to 257 are Extracellular-facing; that stretch reads PESLPEKIRPASWGAQISWKQADPFASLKKVGKDSTVL. A helical transmembrane segment spans residues 258-278; the sequence is LICITVFLSYLPEAGQYSSFF. At 279–283 the chain is on the cytoplasmic side; that stretch reads LYLRQ. A helical transmembrane segment spans residues 284-304; sequence VIGFGSVKIVAFIAMVGILSI. Residues 305–323 are Extracellular-facing; the sequence is LAQTVFLSKLMRSLGNKNT. Residues 324–344 form a helical membrane-spanning segment; it reads VLLGLGFQILQLAWYGFGAQA. Topologically, residues 345–347 are cytoplasmic; that stretch reads WMM. Residues 348–368 traverse the membrane as a helical segment; the sequence is WAAGTVAAMSSITFPAVSALI. Over 369 to 389 the chain is Extracellular; it reads SRNAESDQQGVAQGIITGIRG. The chain crosses the membrane as a helical span at residues 390–410; the sequence is LCNGLGPALYGFIFYLFHVEL. The Cytoplasmic portion of the chain corresponds to 411-430; it reads NELGPKLDSDNDPLQGAFIP. Residues 431–451 traverse the membrane as a helical segment; that stretch reads GPPFLFGACIVLMSFLVALFI. The Extracellular segment spans residues 452–507; it reads PEYRKTGGVQKHNNSISGSLSTPPERGSDEDIEPLLQDSNIWELSSEEPGNQCTEL. A compositionally biased stretch (polar residues) spans 462-473; it reads KHNNSISGSLST. A disordered region spans residues 462-483; that stretch reads KHNNSISGSLSTPPERGSDEDI. Asparagine 464 is a glycosylation site (N-linked (GlcNAc...) asparagine).

This sequence belongs to the major facilitator superfamily.

It is found in the membrane. The chain is Hippocampus abundant transcript-like protein 1 from Rattus norvegicus (Rat).